The following is a 121-amino-acid chain: Splicing factor 3B subunit 6 (121 aa).

An interaction with pre-mRNA branch site region spans residues 12–25; the sequence is EVNRLLYVRNLPYK. The region spanning 15 to 90 is the RRM domain; that stretch reads RLLYVRNLPY…RYLVVLYYQS (76 aa).

It belongs to the SF3B6 family. Component of splicing factor SF3B complex. Component of the U11/U12 snRNPs that are part of the U12-type spliceosome.

Its subcellular location is the nucleus. Involved in pre-mRNA splicing as a component of the splicing factor SF3B complex. SF3B complex is required for 'A' complex assembly formed by the stable binding of U2 snRNP to the branchpoint sequence (BPS) in pre-mRNA. Directly contacts the pre-mRNA branch site adenosine for the first catalytic step of splicing. Enters the spliceosome and associates with the pre-mRNA branch site as part of the 17S U2 or, in the case of the minor spliceosome, as part of the 18S U11/U12 snRNP complex, and thus may facilitate the interaction of these snRNP with the branch sites of U2 and U12 respectively. This chain is Splicing factor 3B subunit 6, found in Drosophila melanogaster (Fruit fly).